Consider the following 317-residue polypeptide: tRNA pseudouridine synthase B (317 aa).

Asp47 (nucleophile) is an active-site residue.

Belongs to the pseudouridine synthase TruB family. Type 1 subfamily.

The catalysed reaction is uridine(55) in tRNA = pseudouridine(55) in tRNA. Its function is as follows. Responsible for synthesis of pseudouridine from uracil-55 in the psi GC loop of transfer RNAs. The protein is tRNA pseudouridine synthase B of Shewanella sp. (strain MR-4).